Here is a 77-residue protein sequence, read N- to C-terminus: Translation initiation factor IF-1, chloroplastic (77 aa).

An S1-like domain is found at 1–71 (MKRQKWIHEG…TRGRIIYRLR (71 aa)).

Belongs to the IF-1 family. In terms of assembly, component of the 30S ribosomal translation pre-initiation complex which assembles on the 30S ribosome in the order IF-2 and IF-3, IF-1 and N-formylmethionyl-tRNA(fMet); mRNA recruitment can occur at any time during PIC assembly.

It localises to the plastid. It is found in the chloroplast. Functionally, one of the essential components for the initiation of protein synthesis. Stabilizes the binding of IF-2 and IF-3 on the 30S subunit to which N-formylmethionyl-tRNA(fMet) subsequently binds. Helps modulate mRNA selection, yielding the 30S pre-initiation complex (PIC). Upon addition of the 50S ribosomal subunit IF-1, IF-2 and IF-3 are released leaving the mature 70S translation initiation complex. The chain is Translation initiation factor IF-1, chloroplastic from Leucophyllum frutescens (Texas ranger).